The sequence spans 328 residues: Renalase (328 aa).

FAD-binding positions include alanine 13, aspartate 32 to lysine 33, arginine 40, and glutamine 56 to tyrosine 57. Substrate is bound by residues tyrosine 57–arginine 61 and serine 96–aspartate 98. Isoleucine 128 provides a ligand contact to FAD. Position 185 (threonine 185) interacts with substrate. Aspartate 302 is an FAD binding site. Residue arginine 308 participates in substrate binding. Valine 309 serves as a coordination point for FAD.

This sequence belongs to the bacterial renalase family. The cofactor is FAD.

It carries out the reaction 1,2-dihydro-beta-NAD + O2 + H(+) = H2O2 + NAD(+). The enzyme catalyses 1,2-dihydro-beta-NADP + O2 + H(+) = H2O2 + NADP(+). It catalyses the reaction 1,6-dihydro-beta-NADP + O2 + H(+) = H2O2 + NADP(+). The catalysed reaction is 1,6-dihydro-beta-NAD + O2 + H(+) = H2O2 + NAD(+). In terms of biological role, catalyzes the oxidation of the 1,2-dihydro- and 1,6-dihydro- isomeric forms of beta-NAD(P) back to beta-NAD(P)+. Has a preference for 1,2-dihydro-beta-NAD as substrate. May serve to protect primary metabolism dehydrogenases from inhibition by the 1,2-dihydro- and 1,6-dihydro-beta-NAD(P) isomers. The protein is Renalase of Pseudomonas savastanoi pv. phaseolicola (strain 1448A / Race 6) (Pseudomonas syringae pv. phaseolicola (strain 1448A / Race 6)).